A 481-amino-acid chain; its full sequence is Glucokinase-1 (481 aa).

The 474-residue stretch at P4–L477 folds into the Hexokinase domain. A hexokinase small subdomain region spans residues S64 to T204. K101 contacts ATP. The glucose-binding stretch occupies residues K146–F172. The hexokinase large subdomain stretch occupies residues N205–D466. D466–G471 is an ATP binding site.

Belongs to the hexokinase family.

The enzyme catalyses D-glucose + ATP = D-glucose 6-phosphate + ADP + H(+). It catalyses the reaction a D-hexose + ATP = a D-hexose 6-phosphate + ADP + H(+). It carries out the reaction D-mannose + ATP = D-mannose 6-phosphate + ADP + H(+). The protein operates within carbohydrate metabolism; hexose metabolism. Its pathway is carbohydrate degradation; glycolysis; D-glyceraldehyde 3-phosphate and glycerone phosphate from D-glucose: step 1/4. Functionally, glukokinase specific for aldohexoses. Phosphorylates glucose and mannose, but not fructose. The polypeptide is Glucokinase-1 (GLK1) (Kluyveromyces lactis (strain ATCC 8585 / CBS 2359 / DSM 70799 / NBRC 1267 / NRRL Y-1140 / WM37) (Yeast)).